The following is a 452-amino-acid chain: Glutamate--tRNA ligase 2 (452 aa).

A 'HIGH' region motif is present at residues 8–18 (PSPTGRLHVGN). Residues 246–250 (KLSKR) carry the 'KMSKS' region motif. K249 is an ATP binding site.

It belongs to the class-I aminoacyl-tRNA synthetase family. Glutamate--tRNA ligase type 1 subfamily. In terms of assembly, monomer.

It is found in the cytoplasm. It catalyses the reaction tRNA(Glu) + L-glutamate + ATP = L-glutamyl-tRNA(Glu) + AMP + diphosphate. Functionally, catalyzes the attachment of glutamate to tRNA(Glu) in a two-step reaction: glutamate is first activated by ATP to form Glu-AMP and then transferred to the acceptor end of tRNA(Glu). The chain is Glutamate--tRNA ligase 2 from Erythrobacter litoralis (strain HTCC2594).